Here is a 292-residue protein sequence, read N- to C-terminus: Bifunctional protein FolD 1 (292 aa).

Position 165–167 (165–167 (GRS)) interacts with NADP(+).

Belongs to the tetrahydrofolate dehydrogenase/cyclohydrolase family. Homodimer.

It carries out the reaction (6R)-5,10-methylene-5,6,7,8-tetrahydrofolate + NADP(+) = (6R)-5,10-methenyltetrahydrofolate + NADPH. It catalyses the reaction (6R)-5,10-methenyltetrahydrofolate + H2O = (6R)-10-formyltetrahydrofolate + H(+). It participates in one-carbon metabolism; tetrahydrofolate interconversion. Its function is as follows. Catalyzes the oxidation of 5,10-methylenetetrahydrofolate to 5,10-methenyltetrahydrofolate and then the hydrolysis of 5,10-methenyltetrahydrofolate to 10-formyltetrahydrofolate. The chain is Bifunctional protein FolD 1 from Myxococcus xanthus (strain DK1622).